The primary structure comprises 373 residues: MKVKVLSLLVPALLVAGAANAAEVYNKDGNKLDLYGKVDGLHYFSDDKSVDGDQTYMRLGFKGETQVTDQLTGYGQWEYQIQGNSAENENNSWTRVAFAGLKFQDVGSFDYGRNYGVVYDVTSWTDVLPEFGGDTYGSDNFMQQRGNGFATYRSTDFFGLVDGLNFAVQYQGKNGSPEGEGMTNNGREALRQNGDGVGGSITYDYEGFGIGAAVSSSKRTDDQNFGLNRYDERYIGNGDRAETYTGGLKYDANNIYLAAQYTQTYNATRVGNLGWANKAQNFEAVAQYQFDFGLRPSLAYLQSKGKNLGVINGRNYDDEDILKYVDVGATYYFNKNMSTYVDYKINLLDDNQFTRDAGINTDNIVALGLVYQF.

The first 21 residues, 1–21 (MKVKVLSLLVPALLVAGAANA), serve as a signal peptide directing secretion. Transmembrane regions (beta stranded) follow at residues 34–42 (LYGKVDGLH), 54–63 (QTYMRLGFKG), 74–84 (YGQWEYQIQGN), 92–101 (SWTRVAFAGL), and 107–115 (GSFDYGRNY). The tract at residues 116–133 (GVVYDVTSWTDVLPEFGG) is loop L3; may constrict the pore. Beta stranded transmembrane passes span 142–154 (MQQR…TYRS), 164–171 (LNFAVQYQ), 197–203 (VGGSITY), 208–215 (FGIGAAVS), 244–250 (YTGGLKY), 255–262 (IYLAAQYT), 272–288 (NLGW…VAQY), 294–301 (LRPSLAYL), 325–332 (VDVGATYY), 337–344 (MSTYVDYK), and 365–372 (VALGLVYQ).

This sequence belongs to the Gram-negative porin family. In terms of assembly, homotrimer. Forms mixed heterotrimers with OmpF and with PhoE; other mixed heterotrimers are also probable. As to quaternary structure, (Microbial infection) Upon infection with phage Sf6 associates with the mature bacteriophage capsid. Was originally suggested to be within the bacteriophage capsid. This has been disproven.

The protein localises to the cell outer membrane. The protein resides in the extracellular vesicle. Its function is as follows. Forms pores that allow passive diffusion of small molecules across the outer membrane. (Microbial infection) Serves as a less-preferential secondary receptor during phage Sf6 infection; infection requires both lipopolysaccharide (LPS) and (in the absence of OmpA) OmpC can serve as the secondary receptor. This is Outer membrane protein C (ompC) from Shigella flexneri.